The chain runs to 274 residues: Shikimate dehydrogenase (NADP(+)) (274 aa).

Shikimate-binding positions include 14–16 and Thr-61; that span reads SQS. Residue Lys-65 is the Proton acceptor of the active site. Positions 86 and 102 each coordinate shikimate. NADP(+) contacts are provided by residues 128–132, 151–156, and Leu-215; these read GAGGA and NRTVEK. Residue Tyr-217 coordinates shikimate. Gly-239 contributes to the NADP(+) binding site.

The protein belongs to the shikimate dehydrogenase family. As to quaternary structure, homodimer.

The enzyme catalyses shikimate + NADP(+) = 3-dehydroshikimate + NADPH + H(+). It participates in metabolic intermediate biosynthesis; chorismate biosynthesis; chorismate from D-erythrose 4-phosphate and phosphoenolpyruvate: step 4/7. Involved in the biosynthesis of the chorismate, which leads to the biosynthesis of aromatic amino acids. Catalyzes the reversible NADPH linked reduction of 3-dehydroshikimate (DHSA) to yield shikimate (SA). The protein is Shikimate dehydrogenase (NADP(+)) of Proteus mirabilis (strain HI4320).